The primary structure comprises 370 residues: 3-isopropylmalate dehydrogenase (370 aa).

77 to 90 (GPKWDAVPYDARPE) is a binding site for NAD(+). Residues R97, R107, R135, and D226 each contribute to the substrate site. The Mg(2+) site is built by D226, D250, and D254. Residue 290-302 (GSAPDIAGKGLAN) coordinates NAD(+).

It belongs to the isocitrate and isopropylmalate dehydrogenases family. LeuB type 1 subfamily. Homodimer. The cofactor is Mg(2+). It depends on Mn(2+) as a cofactor.

The protein localises to the cytoplasm. It catalyses the reaction (2R,3S)-3-isopropylmalate + NAD(+) = 4-methyl-2-oxopentanoate + CO2 + NADH. Its pathway is amino-acid biosynthesis; L-leucine biosynthesis; L-leucine from 3-methyl-2-oxobutanoate: step 3/4. Catalyzes the oxidation of 3-carboxy-2-hydroxy-4-methylpentanoate (3-isopropylmalate) to 3-carboxy-4-methyl-2-oxopentanoate. The product decarboxylates to 4-methyl-2 oxopentanoate. This chain is 3-isopropylmalate dehydrogenase, found in Rhodopseudomonas palustris (strain HaA2).